Here is a 647-residue protein sequence, read N- to C-terminus: Nucleoside triphosphatase I (647 aa).

Positions 48 to 213 constitute a Helicase ATP-binding domain; the sequence is FIGLSELNSL…KYLINLLRPK (166 aa). 61-68 serves as a coordination point for ATP; it reads WDTGYGKT. Positions 150–153 match the DEXH box motif; the sequence is DEVH. A Helicase C-terminal domain is found at 377 to 540; the sequence is YIEACKIILN…KINVLNSFMK (164 aa). Residues 466–532 are binding to the cap-specific mRNA (nucleoside-2'-O-)-methyltransferase; sequence DIIILDLPWK…DLIKSKQDKI (67 aa).

It belongs to the helicase family. NPH I subfamily. Monomer. Interacts (via C-terminus) with RAP94 (via N-terminus). Interacts with the cap-specific mRNA (nucleoside-2'-O-)-methyltransferase.

The protein localises to the virion. It carries out the reaction a ribonucleoside 5'-triphosphate + H2O = a ribonucleoside 5'-diphosphate + phosphate + H(+). Functionally, DNA-dependent ATPase required for providing the needed energy to achieve the termination of early transcripts. Acts in concert with the RAP94 subunit of the virion RNA polymerase and the capping enzyme/VTF to catalyze release of UUUUUNU-containing nascent RNA from the elongation complex. NPH-I must bind ssDNA in order to exhibit ATPase activity. In Melanoplus sanguinipes entomopoxvirus (MsEPV), this protein is Nucleoside triphosphatase I (NPH1).